The following is a 421-amino-acid chain: Enolase (421 aa).

Gln-162 lines the (2R)-2-phosphoglycerate pocket. Catalysis depends on Glu-204, which acts as the Proton donor. The Mg(2+) site is built by Asp-241, Glu-284, and Asp-311. Residues Lys-336, Arg-365, Ser-366, and Lys-387 each contribute to the (2R)-2-phosphoglycerate site. Lys-336 (proton acceptor) is an active-site residue.

The protein belongs to the enolase family. It depends on Mg(2+) as a cofactor.

The protein resides in the cytoplasm. The protein localises to the secreted. It is found in the cell surface. It carries out the reaction (2R)-2-phosphoglycerate = phosphoenolpyruvate + H2O. It functions in the pathway carbohydrate degradation; glycolysis; pyruvate from D-glyceraldehyde 3-phosphate: step 4/5. Its function is as follows. Catalyzes the reversible conversion of 2-phosphoglycerate (2-PG) into phosphoenolpyruvate (PEP). It is essential for the degradation of carbohydrates via glycolysis. This Nautilia profundicola (strain ATCC BAA-1463 / DSM 18972 / AmH) protein is Enolase.